We begin with the raw amino-acid sequence, 769 residues long: Sensor histidine kinase ComP (769 aa).

Topologically, residues 1 to 9 (MKNLIKKFT) are cytoplasmic. Residues 10 to 33 (IAVIVLSILYISYTTYISMNGIII) traverse the membrane as a helical segment. Over 34–113 (GTKIHKNDKS…DFDLVTLNRP (80 aa)) the chain is Extracellular. Residues 114–134 (YSFFLFVLPLFFYFLSIICIF) form a helical membrane-spanning segment. Residues 135-144 (YILKVNKKRR) lie on the Cytoplasmic side of the membrane. Residues 145-167 (SFAAYILILLLLDISIAYISAGG) form a helical membrane-spanning segment. Residues 168 to 235 (PFRGHIINRY…QDYLQVDIDF (68 aa)) lie on the Extracellular side of the membrane. The helical transmembrane segment at 236-257 (LATLNLVSFATLTLFSFSAIYL) threads the bilayer. Topologically, residues 258-272 (HLNKYKYAEHSFILK) are cytoplasmic. Residues 273–295 (LLILTNTLSFAPFLIFFVLPIIF) form a helical membrane-spanning segment. Residues 296–299 (TGNY) are Extracellular-facing. Residues 300-323 (IFPALASASLLVLIPFGLVYQFVA) traverse the membrane as a helical segment. Residues 324-337 (NKMFDIEFILGRMR) lie on the Cytoplasmic side of the membrane. The helical transmembrane segment at 338-357 (YYALLAMIPTLLIVGALVLF) threads the bilayer. Residues 358 to 361 (DVMD) lie on the Extracellular side of the membrane. The chain crosses the membrane as a helical span at residues 362-383 (IQMNPVRQTVFFFVVMFAVFYF). Residues 384-769 (KEVMDFKFRL…GFKADIEIEL (386 aa)) lie on the Cytoplasmic side of the membrane. The region spanning 571 to 769 (LARDLHDSVL…GFKADIEIEL (199 aa)) is the Histidine kinase domain. Position 576 is a phosphohistidine; by autocatalysis (His-576).

Autophosphorylates on a histidine and transfers the phosphate group onto an aspartate in ComA, thus activating it.

The protein localises to the cell membrane. The catalysed reaction is ATP + protein L-histidine = ADP + protein N-phospho-L-histidine.. In terms of biological role, sensor in the two-component regulatory system ComP/ComA involved in a major quorum response pathway that regulates the development of genetic competence. Plays a role in sporulation, at least partly interchangeable with that of SpoIIJ. Probably activates ComA by phosphorylation. This is Sensor histidine kinase ComP (comP) from Bacillus subtilis (strain 168).